The following is a 490-amino-acid chain: Tegument protein VP16 (490 aa).

Residues 12–35 (MNADGASPPPPRPAGGPKNTPAAP) form a disordered region. 4 positions are modified to phosphoserine: Ser18, Ser353, Ser411, and Ser452. The interval 411–490 (STAPPTDVSL…DALGIDEYGG (80 aa)) is transcriptional activation.

This sequence belongs to the herpesviridae tegument protein VP16 protein family. In terms of assembly, interacts with tegument protein VP22. Interacts with gH (via C-terminus). Interacts with the virion host shutoff protein (vhs). Interacts with VP11/12. Associates with the VP16-induced complex; binding to host HCFC1 activates VP16 for association with the octamer motif-binding host protein POU2F1, to form a multiprotein-DNA complex responsible for activating transcription of the viral immediate early genes. Interacts with host P-TEFb; this interaction recruits P-TEFb to the viral alpha-gene promoters and overcomes transcriptional inhibition by ICP22 and promotes transcription of IE genes.

It is found in the virion tegument. Its subcellular location is the host nucleus. In terms of biological role, in the early stage of viral replication, acts as a transcriptional activator of immediate-early (IE) gene products (alpha-genes), which is released by invading virions. Recruits P-TEFb to the viral alpha-gene promoters and overcomes transcriptional inhibition by ICP22 to promote transcription of IE genes. VP16-induced complex represents a regulatory switch: when it is on, it promotes IE-gene expression and thus lytic infection, and when it is off, it limits IE-gene transcription favoring latent infection. Acts as a key activator of lytic infection by initiating the lytic program through the assembly of the transcriptional regulatory VP16-induced complex composed of VP16 and two cellular factors, HCFC1 and POU2F1. This complex recognizes the core motif 'TAATGARAT' in alpha-gene promoters. In the late stage of viral replication, VP16, as a tegument, is involved in viral assembly. Its function is as follows. May play a role in the aggregation of tegument proteins around nucleocapsids during virus morphogenesis. In Human herpesvirus 1 (strain 17) (HHV-1), this protein is Tegument protein VP16.